Consider the following 624-residue polypeptide: Chitin elicitor receptor kinase 1 (624 aa).

A signal peptide spans 1 to 18 (MEASTSLLVLVLAAAAFA). Over 19-240 (AGTVTEAAGD…SPGKGASAGA (222 aa)) the chain is Extracellular. Intrachain disulfides connect Cys-30/Cys-93, Cys-34/Cys-160, and Cys-91/Cys-158. The N-linked (GlcNAc...) asparagine glycan is linked to Asn-48. Chitin is bound at residue 115 to 121 (RGQIYTS). N-linked (GlcNAc...) asparagine glycosylation is present at Asn-128. Position 142-148 (142-148 (PANNIPD)) interacts with chitin. N-linked (GlcNAc...) asparagine glycosylation is found at Asn-153 and Asn-157. Residues 173-218 (LTYPLRAEDTLASVAATYGLSSQLDVVRRYNPGMESATGSGIVYIP) enclose the LysM domain. Residue Asn-223 is glycosylated (N-linked (GlcNAc...) asparagine). A helical membrane pass occupies residues 241–261 (IAGGVVAGVVVLAAIFLYIIF). At 262-624 (YRRRKAKQAT…QGLVNLMSGR (363 aa)) the chain is on the cytoplasmic side. Residues 324–599 (FSIGNKIGQG…RSVVVALMTL (276 aa)) form the Protein kinase domain. ATP is bound by residues 330–338 (IGQGGFGAV) and Lys-351. Asp-443 acts as the Proton acceptor in catalysis.

Belongs to the protein kinase superfamily. Ser/Thr protein kinase family. In terms of assembly, homooligomer. Interacts with CEBIP. Interacts with LYP4 and LYP6. Interacts with RLCK176. Autophosphorylated; induced by chitin and derivatives. In terms of tissue distribution, expressed in seedlings, roots, shoots and stems, and, to a lower extent, in flowers.

It localises to the cell membrane. It carries out the reaction L-seryl-[protein] + ATP = O-phospho-L-seryl-[protein] + ADP + H(+). The catalysed reaction is L-threonyl-[protein] + ATP = O-phospho-L-threonyl-[protein] + ADP + H(+). Lysin motif (LysM) receptor kinase required as a cell surface receptor for chitin elicitor (chitooligosaccharides) signaling leading to innate immunity in response to biotic stresses. Involved in the resistance to pathogenic fungi, probably by sensing microbe-associated molecular patterns (MAMP) and pathogen-associated molecular patterns (PAMP). Involved in the detection of microbial peptidoglycans (PGNs) and mediates PGN response. Plays dual roles in PGN and chitin signaling during innate immunity. Acts as an adapter for LYP4 and LYP6 and mediates signal transduction from the extracellular to intracellular spaces. Participates in the activation of defense genes during response to PGN and chitin. Phosphorylates the downstream partner RLCK185 in response to chitin elicitation. This Oryza sativa subsp. japonica (Rice) protein is Chitin elicitor receptor kinase 1.